Here is a 143-residue protein sequence, read N- to C-terminus: Transcriptional regulator MraZ (143 aa).

SpoVT-AbrB domains follow at residues glutamate 5–valine 47 and alanine 76–arginine 119.

This sequence belongs to the MraZ family. In terms of assembly, forms oligomers.

It localises to the cytoplasm. Its subcellular location is the nucleoid. This is Transcriptional regulator MraZ from Roseiflexus castenholzii (strain DSM 13941 / HLO8).